Consider the following 439-residue polypeptide: MFASETEASASSTQVTTEEPVQQPSVVDRVAGMPLISSTCHMVSAAYTSTKESHPHVKTVCDVAEKGVKTLTAAAVSGAQPILSKLEPQLTSASEYAHRGLDKLEENLPILQQPSEKVLADTKELVSSKVSEAREAVSNTVSSAKDTVASRVTEAVVVTRGAVQSGVDLTKSMVTSSVHSVMGSRVGQMVLSGVDTVLGKSEEWVDNHLPMTDAELAHLATSLEGFDMASVAQQRQDQSYFVRLGSLSERLRQRAYEHSLGKLQHTRQRAQEALLQLSQALSLMETVKQGVDQKLVEGQEKLHQMWLSWNQKRLQGGEEDPAKPEQVESQTFTMFRDVTQQLQTTCASLGASLQGLPAHVKEQALQARRQVEDLQATFSGMHSFQDLSSNVLMQSREQVARAREALDHVVDYVAQNTPVMWLVGPFAPGVVEKAPEEKK.

A compositionally biased stretch (low complexity) spans Met1–Glu19. The segment at Met1–Val26 is disordered. Lys66 carries the post-translational modification N6-acetyllysine. Ser92 is modified (phosphoserine). Lys123 is covalently cross-linked (Glycyl lysine isopeptide (Lys-Gly) (interchain with G-Cter in SUMO1)). Ser131 carries the phosphoserine modification. At Thr175 the chain carries Phosphothreonine. Ser180 and Ser184 each carry phosphoserine. The residue at position 221 (Thr221) is a Phosphothreonine. Phosphoserine is present on residues Ser222 and Ser246. Coiled-coil stretches lie at residues Arg254 to Ser282 and Ala358 to Met381. Phosphotyrosine is present on Tyr256.

Belongs to the perilipin family. Homooligomer. Interacts with M6PR (via the cytoplasmic domain). Interacts with IGF2R (via the cytoplasmic domain). Post-translationally, phosphorylation at Tyr-256 by isoform 1 of CHKA (CHKalpha2) promotes dissociation from lipid droplets: dissociation is followed by recruitment of autophagosome machinery to lipid droplets and subsequent lipid droplet lipolysis.

Its subcellular location is the lipid droplet. It is found in the endosome membrane. It localises to the cytoplasm. Functionally, structural component of lipid droplets, which is required for the formation and maintenance of lipid storage droplets. Required for the transport of mannose 6-phosphate receptors (MPR) from endosomes to the trans-Golgi network. The polypeptide is Perilipin-3 (PLIN3) (Sus scrofa (Pig)).